Reading from the N-terminus, the 732-residue chain is Cullin-3A (732 aa).

The 63-residue stretch at 662–724 (DRKPQIEAAI…RDFLERDSTD (63 aa)) folds into the Cullin neddylation domain. A Glycyl lysine isopeptide (Lys-Gly) (interchain with G-Cter in NEDD8) cross-link involves residue K676.

The protein belongs to the cullin family. In terms of assembly, interacts with CSN2 and RBX1A. Interacts with BTB/POZ domain-containing proteins BPM1, BPM2, BPM3, BPM6, BT1, BT2, BT3, BT5, AT1G01640, AT1G21780 and AT5G48510. Interacts with SR1IP1. Interacts with NPR3 and NPR4. Binds to NPR1; this interaction requires NPR3 and NPR4. Post-translationally, neddylated. Deneddylated via its interaction with the COP9 signalosome (CSN) complex.

Component of the cullin-RING ubiquitin ligases (CRL), or CUL3-RBX1-BTB protein E3 ligase complexes which mediate the ubiquitination and subsequent proteasomal degradation of target proteins. The functional specificity of the CRL complex depends on the BTB domain-containing protein as the substrate recognition component. Involved in embryo pattern formation and endosperm development. Required for the normal division and organization of the root stem cells and columella root cap cells. Regulates primary root growth by an unknown pathway, but in an ethylene-dependent manner. Functions in distal root patterning, by an ethylene-independent mechanism. Functionally redundant with CUL3B. This is Cullin-3A from Arabidopsis thaliana (Mouse-ear cress).